The chain runs to 674 residues: Probable potassium transport system protein Kup (674 aa).

Transmembrane regions (helical) follow at residues 7-27, 52-72, 95-115, 145-165, 169-189, 204-224, 244-264, 291-311, 342-362, 368-388, 397-417, and 425-445; these read IFWG…TSPL, LSLV…LIAL, WLIL…TLTP, LVTF…TSFI, FGPL…VNLI, LMLL…SVFL, IYLT…GQGA, VYLF…QALI, IYIR…LVYF, MEAA…ILLS, VVFN…FLIS, and GGYV…IWYF.

The protein belongs to the HAK/KUP transporter (TC 2.A.72) family.

It is found in the cell membrane. The enzyme catalyses K(+)(in) + H(+)(in) = K(+)(out) + H(+)(out). Its function is as follows. Transport of potassium into the cell. Likely operates as a K(+):H(+) symporter. The sequence is that of Probable potassium transport system protein Kup from Ligilactobacillus salivarius (strain UCC118) (Lactobacillus salivarius).